Reading from the N-terminus, the 104-residue chain is Toxin-like protein 14 (104 aa).

Positions 1 to 25 (MNTYNARLYIFSLALALVILKGTKC) are cleaved as a signal peptide.

Post-translationally, contains 4 disulfide bonds. As to expression, expressed by the venom gland.

Its subcellular location is the secreted. This chain is Toxin-like protein 14, found in Urodacus yaschenkoi (Inland robust scorpion).